The following is a 140-amino-acid chain: Large ribosomal subunit protein uL13 (140 aa).

Belongs to the universal ribosomal protein uL13 family. As to quaternary structure, part of the 50S ribosomal subunit.

Functionally, this protein is one of the early assembly proteins of the 50S ribosomal subunit, although it is not seen to bind rRNA by itself. It is important during the early stages of 50S assembly. The protein is Large ribosomal subunit protein uL13 of Nautilia profundicola (strain ATCC BAA-1463 / DSM 18972 / AmH).